Here is a 259-residue protein sequence, read N- to C-terminus: 3-deoxy-manno-octulosonate cytidylyltransferase 1 (259 aa).

This sequence belongs to the KdsB family.

It is found in the cytoplasm. It catalyses the reaction 3-deoxy-alpha-D-manno-oct-2-ulosonate + CTP = CMP-3-deoxy-beta-D-manno-octulosonate + diphosphate. It participates in nucleotide-sugar biosynthesis; CMP-3-deoxy-D-manno-octulosonate biosynthesis; CMP-3-deoxy-D-manno-octulosonate from 3-deoxy-D-manno-octulosonate and CTP: step 1/1. Its pathway is bacterial outer membrane biogenesis; lipopolysaccharide biosynthesis. Functionally, activates KDO (a required 8-carbon sugar) for incorporation into bacterial lipopolysaccharide in Gram-negative bacteria. The protein is 3-deoxy-manno-octulosonate cytidylyltransferase 1 of Hydrogenovibrio crunogenus (strain DSM 25203 / XCL-2) (Thiomicrospira crunogena).